The sequence spans 106 residues: Iron-sulfur cluster assembly protein CyaY (106 aa).

This sequence belongs to the frataxin family.

Involved in iron-sulfur (Fe-S) cluster assembly. May act as a regulator of Fe-S biogenesis. This chain is Iron-sulfur cluster assembly protein CyaY, found in Yersinia pestis bv. Antiqua (strain Antiqua).